Reading from the N-terminus, the 794-residue chain is Phenylalanine--tRNA ligase beta subunit (794 aa).

The tRNA-binding domain occupies 40-158; sequence NSLNSELILG…LKKYIGSDVK (119 aa). One can recognise a B5 domain in the interval 402–477; the sequence is KNKQSLEIKL…RLYSYDKIDE (76 aa). Positions 455, 461, 464, and 465 each coordinate Mg(2+). The FDX-ACB domain maps to 702–794; it reads SKFQSSSRDL…NIKQMKVVIR (93 aa).

The protein belongs to the phenylalanyl-tRNA synthetase beta subunit family. Type 1 subfamily. Tetramer of two alpha and two beta subunits. Mg(2+) serves as cofactor.

It is found in the cytoplasm. It catalyses the reaction tRNA(Phe) + L-phenylalanine + ATP = L-phenylalanyl-tRNA(Phe) + AMP + diphosphate + H(+). This Mycoplasma mycoides subsp. mycoides SC (strain CCUG 32753 / NCTC 10114 / PG1) protein is Phenylalanine--tRNA ligase beta subunit.